A 370-amino-acid polypeptide reads, in one-letter code: 4-hydroxy-3-methylbut-2-en-1-yl diphosphate synthase (flavodoxin) (370 aa).

[4Fe-4S] cluster is bound by residues C268, C271, C303, and E310.

This sequence belongs to the IspG family. It depends on [4Fe-4S] cluster as a cofactor.

It carries out the reaction (2E)-4-hydroxy-3-methylbut-2-enyl diphosphate + oxidized [flavodoxin] + H2O + 2 H(+) = 2-C-methyl-D-erythritol 2,4-cyclic diphosphate + reduced [flavodoxin]. The protein operates within isoprenoid biosynthesis; isopentenyl diphosphate biosynthesis via DXP pathway; isopentenyl diphosphate from 1-deoxy-D-xylulose 5-phosphate: step 5/6. Functionally, converts 2C-methyl-D-erythritol 2,4-cyclodiphosphate (ME-2,4cPP) into 1-hydroxy-2-methyl-2-(E)-butenyl 4-diphosphate. This chain is 4-hydroxy-3-methylbut-2-en-1-yl diphosphate synthase (flavodoxin), found in Bacillus cereus (strain G9842).